Consider the following 81-residue polypeptide: Sulfur carrier protein TusA (81 aa).

Residue Cys19 is the Cysteine persulfide intermediate of the active site.

It belongs to the sulfur carrier protein TusA family. In terms of assembly, interacts with IscS.

It localises to the cytoplasm. The protein operates within tRNA modification. Sulfur carrier protein involved in sulfur trafficking in the cell. Part of a sulfur-relay system required for 2-thiolation during synthesis of 2-thiouridine of the modified wobble base 5-methylaminomethyl-2-thiouridine (mnm(5)s(2)U) in tRNA. Interacts with IscS and stimulates its cysteine desulfurase activity. Accepts an activated sulfur from IscS, which is then transferred to TusD, and thus determines the direction of sulfur flow from IscS to 2-thiouridine formation. Also appears to be involved in sulfur transfer for the biosynthesis of molybdopterin. The protein is Sulfur carrier protein TusA of Erwinia tasmaniensis (strain DSM 17950 / CFBP 7177 / CIP 109463 / NCPPB 4357 / Et1/99).